We begin with the raw amino-acid sequence, 190 residues long: Peptidyl-tRNA hydrolase (190 aa).

Residue Phe-14 coordinates tRNA. The active-site Proton acceptor is His-19. TRNA is bound by residues Met-64, Asn-66, and Asn-112.

It belongs to the PTH family. As to quaternary structure, monomer.

The protein resides in the cytoplasm. It carries out the reaction an N-acyl-L-alpha-aminoacyl-tRNA + H2O = an N-acyl-L-amino acid + a tRNA + H(+). Functionally, hydrolyzes ribosome-free peptidyl-tRNAs (with 1 or more amino acids incorporated), which drop off the ribosome during protein synthesis, or as a result of ribosome stalling. In terms of biological role, catalyzes the release of premature peptidyl moieties from peptidyl-tRNA molecules trapped in stalled 50S ribosomal subunits, and thus maintains levels of free tRNAs and 50S ribosomes. This chain is Peptidyl-tRNA hydrolase, found in Staphylococcus haemolyticus (strain JCSC1435).